Here is a 973-residue protein sequence, read N- to C-terminus: Splicing regulator ARVCF (973 aa).

Residues 95–123 form a disordered region; it reads VTVEEDPGTPTSHVSIVTSEDGTTRRTET. Phosphothreonine is present on residues T103 and T105. A compositionally biased stretch (polar residues) spans 103–115; that stretch reads TPTSHVSIVTSED. Position 171 is an omega-N-methylarginine (R171). Disordered stretches follow at residues 233–254 and 267–331; these read RREA…LPEH and RSLA…QPER. S268 is subject to Phosphoserine. A compositionally biased stretch (acidic residues) spans 271-281; it reads ADDEGGPDLEP. Basic and acidic residues predominate over residues 289–303; the sequence is RRPEYGRGLRARALE. Phosphoserine occurs at positions 333, 336, 344, and 346. 6 ARM repeats span residues 349-388, 391-430, 434-468, 469-509, 527-566, and 576-623; these read STRK…HLCF, EGIK…NLSY, ADNK…VTGT, LWNL…NEDS, LRNV…DTDN, and MRNL…GKKA. The segment at 593–623 is disordered; the sequence is YQEVEPGIPGSAATSQRRRKDDASCFGGKKA. S607 is modified (phosphoserine). The Nuclear localization signal signature appears at 608 to 624; the sequence is QRRRKDDASCFGGKKAK. A Phosphothreonine modification is found at T637. ARM repeat units follow at residues 641–681, 694–733, 734–776, and 777–821; these read PKRT…AAGA, TYIR…NLSL, DQRN…AVLN, and TIHE…SHVL. Residues 771–955 are required for interaction with RNA-binding proteins DDX5, HNRNPH2 and SRSF1 and with mRNAs; it reads VVAVLNTIHE…VLGPGAPPFC (185 aa). The tract at residues 844 to 926 is disordered; sequence FQSASTAKGP…KELLKGPGPA (83 aa). S865 bears the Phosphoserine mark. T866 bears the Phosphothreonine mark. Residues 872 to 881 show a composition bias toward basic and acidic residues; that stretch reads KNLDGEKSTT.

Belongs to the beta-catenin family. In terms of assembly, component of a ribonucleoprotein complex containing mRNAs and RNA-binding proteins including DDX5, HNRNPH2 and SRSF1 as well as ARVCF. Interacts (via the extreme C-terminus) with FRMPD2 (via the PDZ 2 domain). Interacts with CCDC85B. In terms of tissue distribution, expressed in optic nerve sheath envelope (at protein level). Expressed in heart (at protein level).

The protein localises to the cell junction. It localises to the adherens junction. It is found in the nucleus. Its subcellular location is the cytoplasm. Its function is as follows. Contributes to the regulation of alternative splicing of pre-mRNAs. This Rattus norvegicus (Rat) protein is Splicing regulator ARVCF.